Here is a 149-residue protein sequence, read N- to C-terminus: Macrodomain Ter protein (149 aa).

The protein belongs to the MatP family. Homodimer.

Its subcellular location is the cytoplasm. Required for spatial organization of the terminus region of the chromosome (Ter macrodomain) during the cell cycle. Prevents early segregation of duplicated Ter macrodomains during cell division. Binds specifically to matS, which is a 13 bp signature motif repeated within the Ter macrodomain. In Vibrio parahaemolyticus serotype O3:K6 (strain RIMD 2210633), this protein is Macrodomain Ter protein.